Reading from the N-terminus, the 284-residue chain is Probable O-methyltransferase ustE (284 aa).

N22 and N29 each carry an N-linked (GlcNAc...) asparagine glycan. 2 helical membrane-spanning segments follow: residues 88 to 108 (LLLL…VLTV) and 157 to 177 (YLAT…VCEI). N205 is a glycosylation site (N-linked (GlcNAc...) asparagine). A helical membrane pass occupies residues 215 to 235 (GLALASGGMIYGMSIAMFFMW). The N-linked (GlcNAc...) asparagine glycan is linked to N264.

The protein belongs to the class VI-like SAM-binding methyltransferase superfamily. Isoprenylcysteine carboxyl methyltransferase family.

The protein localises to the membrane. The protein operates within secondary metabolite biosynthesis. Functionally, probable O-methyltransferase; part of the gene cluster that mediates the biosynthesis of ustilaginoidins, dimeric gamma-naphthopyrones isolated from different fungal species. The first step in the biosynthesis of ustilaginoidins is the production of gamma-naphthopyrone precursor YWA1 by the non-reducing polyketide synthase ustP, via condensation of one acetyl-CoA starter unit with 6 malonyl-CoA units. YWA1 is then probably substrate of the ustZ to yield norrubrofusarin via a dehydration reaction. A key enzyme in the biosynthetic pathway is the laccase ustL, which catalyzes the oxidative dimerization of norrubrofusarin to ustilaginoidin A. It can produce the M- and P-atropisomers in varying amounts, depending on the reaction conditions. For the biosynthesis of 3-methylustilaginoid in derivatives such as chaetochromin A, a methylated derivative of YWA1 is required. The C-methylation is considered to be catalyzed by ustM, the phosphopantetheine attachment site of which indicates that it acts on the growing polyketide chain before release of the product. For the biosynthesis of chaetochromin A, it is assumed that saturation of the D2 double bond takes place before dimerization, and is probably catalyzed by an external reductase because no candidate gene was identified within the cluster. The polypeptide is Probable O-methyltransferase ustE (Ustilaginoidea virens (Rice false smut fungus)).